Consider the following 443-residue polypeptide: Tol-Pal system protein TolB (443 aa).

The first 33 residues, 1 to 33 (MKIGIINTKIRTVFSAFACMIAASLVCTMPARA), serve as a signal peptide directing secretion.

This sequence belongs to the TolB family. In terms of assembly, the Tol-Pal system is composed of five core proteins: the inner membrane proteins TolA, TolQ and TolR, the periplasmic protein TolB and the outer membrane protein Pal. They form a network linking the inner and outer membranes and the peptidoglycan layer.

It localises to the periplasm. Part of the Tol-Pal system, which plays a role in outer membrane invagination during cell division and is important for maintaining outer membrane integrity. In Brucella anthropi (strain ATCC 49188 / DSM 6882 / CCUG 24695 / JCM 21032 / LMG 3331 / NBRC 15819 / NCTC 12168 / Alc 37) (Ochrobactrum anthropi), this protein is Tol-Pal system protein TolB.